The chain runs to 277 residues: UBX domain-containing protein 8 (277 aa).

A topological domain (cytoplasmic) is located at residue methionine 1. Residues 2–22 traverse the membrane as a helical segment; that stretch reads ASRGVVGLFLLSALPLLCLEL. Topologically, residues 23 to 33 are lumenal; it reads RRGIPSLGIKD. Residues 34–54 form a helical membrane-spanning segment; sequence LILLSGRIFLLLALLTLVISV. Residues 55–277 lie on the Cytoplasmic side of the membrane; that stretch reads TTSWFNSLKP…NVEEKEQSSQ (223 aa). Residues 64–89 are disordered; that stretch reads PSQGHLKEGEKENEKRRRLVRERQQE. Basic and acidic residues predominate over residues 68–89; sequence HLKEGEKENEKRRRLVRERQQE. The region spanning 193–269 is the UBX domain; it reads TAEEVVTVAL…GITVDTVLNV (77 aa).

As to quaternary structure, interacts with SYVN1 and VCP. As to expression, highly expressed in gonads. In testis, expressed in post-meiotic round spermatids, while in ovaries it is expressed in granulosa cells.

It localises to the endoplasmic reticulum membrane. In terms of biological role, involved in endoplasmic reticulum-associated degradation (ERAD) for misfolded lumenal proteins, possibly by tethering VCP to the endoplasmic reticulum membrane. May play a role in reproduction. In Mus musculus (Mouse), this protein is UBX domain-containing protein 8 (Ubxn8).